The following is a 271-amino-acid chain: 2,3,4,5-tetrahydropyridine-2,6-dicarboxylate N-succinyltransferase (271 aa).

Arg102 and Asp139 together coordinate substrate.

Belongs to the transferase hexapeptide repeat family. In terms of assembly, homotrimer.

The protein resides in the cytoplasm. The catalysed reaction is (S)-2,3,4,5-tetrahydrodipicolinate + succinyl-CoA + H2O = (S)-2-succinylamino-6-oxoheptanedioate + CoA. Its pathway is amino-acid biosynthesis; L-lysine biosynthesis via DAP pathway; LL-2,6-diaminopimelate from (S)-tetrahydrodipicolinate (succinylase route): step 1/3. In Coxiella burnetii (strain RSA 331 / Henzerling II), this protein is 2,3,4,5-tetrahydropyridine-2,6-dicarboxylate N-succinyltransferase.